We begin with the raw amino-acid sequence, 547 residues long: Calcium-dependent protein kinase 16 (547 aa).

The tract at residues 1–53 (MGNCCRSPAAAAREDVKTSHFPASTGGGKKKPHQARNGGGGGGGGGGGGWEKK) is disordered. Gly-2 carries N-myristoyl glycine lipidation. The segment covering 37 to 49 (NGGGGGGGGGGGG) has biased composition (gly residues). The region spanning 73 to 331 (YALDRELGRG…AKQVLEHTWL (259 aa)) is the Protein kinase domain. ATP-binding positions include 79-87 (LGRGEFGVT) and Lys-102. The active-site Proton acceptor is Asp-197. An autoinhibitory domain region spans residues 337-367 (APNVPLGDIVKSRLKQFSRMNRFKRRALRVI). EF-hand domains are found at residues 374–409 (EEVE…FGSH), 410–445 (LAES…LQRM), 446–481 (ANGE…DGAT), and 482–517 (DIME…GTDW). Ca(2+) contacts are provided by Asp-387, Asp-389, Asp-391, Glu-398, Asp-423, Asn-425, Glu-434, Asp-459, Asp-461, Asn-463, Tyr-465, Glu-470, Asp-495, Asp-497, Asp-499, Lys-501, and Glu-506.

The protein belongs to the protein kinase superfamily. Ser/Thr protein kinase family. CDPK subfamily.

The protein localises to the membrane. It carries out the reaction L-seryl-[protein] + ATP = O-phospho-L-seryl-[protein] + ADP + H(+). It catalyses the reaction L-threonyl-[protein] + ATP = O-phospho-L-threonyl-[protein] + ADP + H(+). With respect to regulation, activated by calcium. Autophosphorylation may play an important role in the regulation of the kinase activity. Functionally, may play a role in signal transduction pathways that involve calcium as a second messenger. This chain is Calcium-dependent protein kinase 16, found in Oryza sativa subsp. japonica (Rice).